A 195-amino-acid polypeptide reads, in one-letter code: Interferon tau-8 (195 aa).

Residues 1 to 23 (MAFVLSLLMALVLVSYGPGGSLG) form the signal peptide. 2 disulfide bridges follow: C24-C122 and C52-C162.

This sequence belongs to the alpha/beta interferon family. IFN-alphaII subfamily. As to expression, constitutively and exclusively expressed in the mononuclear cells of the extraembryonic trophectoderm.

The protein localises to the secreted. Its function is as follows. Paracrine hormone primarily responsible for maternal recognition of pregnancy. Interacts with endometrial receptors, probably type I interferon receptors, and blocks estrogen receptor expression, preventing the estrogen-induced increase in oxytocin receptor expression in the endometrium. This results in the suppression of the pulsatile endometrial release of the luteolytic hormone prostaglandin F2-alpha, hindering the regression of the corpus luteum (luteolysis) and therefore a return to ovarian cyclicity. This, and a possible direct effect of IFN-tau on prostaglandin synthesis, leads in turn to continued ovarian progesterone secretion, which stimulates the secretion by the endometrium of the nutrients required for the growth of the conceptus. In summary, displays particularly high antiviral and antiproliferative potency concurrently with particular weak cytotoxicity, high antiluteolytic activity and immunomodulatory properties. In contrast with other IFNs, IFN-tau is not virally inducible. The protein is Interferon tau-8 (IFNT8) of Ovis aries (Sheep).